The chain runs to 663 residues: UvrABC system protein B (663 aa).

The region spanning 26-414 is the Helicase ATP-binding domain; sequence DGLESGLAKQ…DNVAEQVVRP (389 aa). 39–46 contributes to the ATP binding site; it reads GVTGSGKT. A Beta-hairpin motif is present at residues 92–115; that stretch reads YYDYYQPEAYVPASDTFIEKDASI. The region spanning 430–596 is the Helicase C-terminal domain; sequence QVDDLMSEIR…GINKSVEDIL (167 aa). The 36-residue stretch at 624-659 folds into the UVR domain; sequence AKEINALEKQMYAHAQNMEFELAAKIRDEYLLLKEQ.

It belongs to the UvrB family. Forms a heterotetramer with UvrA during the search for lesions. Interacts with UvrC in an incision complex.

Its subcellular location is the cytoplasm. In terms of biological role, the UvrABC repair system catalyzes the recognition and processing of DNA lesions. A damage recognition complex composed of 2 UvrA and 2 UvrB subunits scans DNA for abnormalities. Upon binding of the UvrA(2)B(2) complex to a putative damaged site, the DNA wraps around one UvrB monomer. DNA wrap is dependent on ATP binding by UvrB and probably causes local melting of the DNA helix, facilitating insertion of UvrB beta-hairpin between the DNA strands. Then UvrB probes one DNA strand for the presence of a lesion. If a lesion is found the UvrA subunits dissociate and the UvrB-DNA preincision complex is formed. This complex is subsequently bound by UvrC and the second UvrB is released. If no lesion is found, the DNA wraps around the other UvrB subunit that will check the other stand for damage. In Legionella pneumophila (strain Paris), this protein is UvrABC system protein B.